The primary structure comprises 317 residues: Orange carotenoid-binding protein (317 aa).

The region spanning 18–169 (ADVVPATIAR…DMGFDTSKLG (152 aa)) is the OCP N-terminal domain. The 3'-hydroxyechinenone site is built by Leu-37, Tyr-203, and Trp-290.

The protein belongs to the orange carotenoid-binding protein family. Homodimer. It depends on 3'-hydroxyechinenone as a cofactor. Proteolytically cleaved into a red 16.7 kDa form named red carotenoid-binding protein (RCP) which lacks 15 residues from the N-terminus and approximately 150 residues from the C-terminus.

The protein resides in the cellular thylakoid membrane. Acts as a blue-light photoreceptor and photo-protectant. Essential for inhibiting damaged induced by excess blue-green light via a process known as non-photochemical quenching (NPQ). Binding carotenoids improves OCP's intrinsic photoprotectant activity by broadening its absorption spectrum and facilitating the dissipation of absorbed energy. In the dark or dim light the stable inactive form (OCP-O) is orange, upon illumination with blue-green light it converts to a metastable active red form (OCP-R), inducing energy dissipation, quenching cellular fluorescence via NPQ. In Limnospira maxima (Arthrospira maxima), this protein is Orange carotenoid-binding protein.